The chain runs to 278 residues: Bifunctional protein FolD (278 aa).

NADP(+) is bound by residues 162 to 164 and Ile-228; that span reads GAG.

It belongs to the tetrahydrofolate dehydrogenase/cyclohydrolase family. As to quaternary structure, homodimer.

The catalysed reaction is (6R)-5,10-methylene-5,6,7,8-tetrahydrofolate + NADP(+) = (6R)-5,10-methenyltetrahydrofolate + NADPH. It catalyses the reaction (6R)-5,10-methenyltetrahydrofolate + H2O = (6R)-10-formyltetrahydrofolate + H(+). It functions in the pathway one-carbon metabolism; tetrahydrofolate interconversion. In terms of biological role, catalyzes the oxidation of 5,10-methylenetetrahydrofolate to 5,10-methenyltetrahydrofolate and then the hydrolysis of 5,10-methenyltetrahydrofolate to 10-formyltetrahydrofolate. The protein is Bifunctional protein FolD of Hydrogenobaculum sp. (strain Y04AAS1).